The sequence spans 64 residues: uncharacterized protein (64 aa).

This is an uncharacterized protein from Sulfolobus islandicus rod-shaped virus 1 (SIRV-1).